We begin with the raw amino-acid sequence, 185 residues long: Ribosome-recycling factor (185 aa).

It belongs to the RRF family.

The protein localises to the cytoplasm. Responsible for the release of ribosomes from messenger RNA at the termination of protein biosynthesis. May increase the efficiency of translation by recycling ribosomes from one round of translation to another. This is Ribosome-recycling factor from Baumannia cicadellinicola subsp. Homalodisca coagulata.